The primary structure comprises 329 residues: Probable CTD kinase subunit alpha homolog (329 aa).

The region spanning 22 to 297 (YEKIRIIGEG…VEQVVGSKYF (276 aa)) is the Protein kinase domain. Residues 28-36 (IGEGTFGQV) and Lys49 each bind ATP. Asp139 serves as the catalytic Proton acceptor.

Belongs to the protein kinase superfamily. CMGC Ser/Thr protein kinase family. CDC2/CDKX subfamily. In terms of assembly, component of the CTDK-I complex.

The protein localises to the nucleus. It is found in the nucleolus. It carries out the reaction [DNA-directed RNA polymerase] + ATP = phospho-[DNA-directed RNA polymerase] + ADP + H(+). In terms of biological role, catalytic subunit of the CTDK-I complex, which hyperphosphorylates the C-terminal heptapeptide repeat domain (CTD) of the largest RNA polymerase II subunit. Involved in RNA polymerase II transcriptional elongation and pre-mRNA 3'-end processing. This chain is Probable CTD kinase subunit alpha homolog (CTK1), found in Encephalitozoon cuniculi (strain GB-M1) (Microsporidian parasite).